We begin with the raw amino-acid sequence, 211 residues long: Ribosome maturation factor RimM (211 aa).

A PRC barrel domain is found at 111-182 (PDAWYDHQLV…TLVVTPPLGL (72 aa)). The tract at residues 184–211 (EEIPDETPTAEPTPAEAAEPAPEGDDAR) is disordered. The span at 189–204 (ETPTAEPTPAEAAEPA) shows a compositional bias: low complexity.

Belongs to the RimM family. Binds ribosomal protein uS19.

It is found in the cytoplasm. Its function is as follows. An accessory protein needed during the final step in the assembly of 30S ribosomal subunit, possibly for assembly of the head region. Essential for efficient processing of 16S rRNA. May be needed both before and after RbfA during the maturation of 16S rRNA. It has affinity for free ribosomal 30S subunits but not for 70S ribosomes. This is Ribosome maturation factor RimM from Clavibacter michiganensis subsp. michiganensis (strain NCPPB 382).